We begin with the raw amino-acid sequence, 345 residues long: Uroporphyrinogen decarboxylase (345 aa).

Substrate-binding positions include 27–31 (RQAGR), Phe-46, Asp-76, Tyr-152, Ser-207, and His-320.

This sequence belongs to the uroporphyrinogen decarboxylase family. As to quaternary structure, homodimer.

It is found in the cytoplasm. The enzyme catalyses uroporphyrinogen III + 4 H(+) = coproporphyrinogen III + 4 CO2. The protein operates within porphyrin-containing compound metabolism; protoporphyrin-IX biosynthesis; coproporphyrinogen-III from 5-aminolevulinate: step 4/4. Catalyzes the decarboxylation of four acetate groups of uroporphyrinogen-III to yield coproporphyrinogen-III. In Geobacillus kaustophilus (strain HTA426), this protein is Uroporphyrinogen decarboxylase.